We begin with the raw amino-acid sequence, 245 residues long: Pyridoxine 5'-phosphate synthase (245 aa).

Residue asparagine 7 coordinates 3-amino-2-oxopropyl phosphate. Residue 9-10 participates in 1-deoxy-D-xylulose 5-phosphate binding; sequence DH. Arginine 18 is a binding site for 3-amino-2-oxopropyl phosphate. The active-site Proton acceptor is the histidine 43. Positions 45 and 50 each coordinate 1-deoxy-D-xylulose 5-phosphate. The active-site Proton acceptor is glutamate 70. Threonine 100 lines the 1-deoxy-D-xylulose 5-phosphate pocket. Residue histidine 190 is the Proton donor of the active site. Residues glycine 191 and 212 to 213 each bind 3-amino-2-oxopropyl phosphate; that span reads GH.

Belongs to the PNP synthase family. In terms of assembly, homooctamer; tetramer of dimers.

It localises to the cytoplasm. It catalyses the reaction 3-amino-2-oxopropyl phosphate + 1-deoxy-D-xylulose 5-phosphate = pyridoxine 5'-phosphate + phosphate + 2 H2O + H(+). The protein operates within cofactor biosynthesis; pyridoxine 5'-phosphate biosynthesis; pyridoxine 5'-phosphate from D-erythrose 4-phosphate: step 5/5. Catalyzes the complicated ring closure reaction between the two acyclic compounds 1-deoxy-D-xylulose-5-phosphate (DXP) and 3-amino-2-oxopropyl phosphate (1-amino-acetone-3-phosphate or AAP) to form pyridoxine 5'-phosphate (PNP) and inorganic phosphate. This chain is Pyridoxine 5'-phosphate synthase, found in Prochlorococcus marinus (strain NATL2A).